The chain runs to 394 residues: Junctional adhesion molecule-like (394 aa).

Positions 1–19 (MFCPLKLILLPVLLDYSLG) are cleaved as a signal peptide. Ig-like V-type domains lie at 20 to 132 (LNDL…KAVV) and 137 to 250 (PEEP…IVLH). At 20–275 (LNDLNVSPPE…RPLVLGGNQL (256 aa)) the chain is on the extracellular side. Cystine bridges form between Cys42–Cys116 and Cys155–Cys234. N-linked (GlcNAc...) asparagine glycosylation is found at Asn76 and Asn231. The chain crosses the membrane as a helical span at residues 276 to 296 (VIIVGIVCATILLLPVLILIV). At 297-394 (KKTCGNKSSV…GGMPKTQQAF (98 aa)) the chain is on the cytoplasmic side. The interval 369–394 (PSLRSDRNNSLEKKSGGGMPKTQQAF) is disordered. The span at 372 to 383 (RSDRNNSLEKKS) shows a compositional bias: basic and acidic residues.

Belongs to the immunoglobulin superfamily. Homodimer; active form in leukocyte-endothelial cell adhesion. Interacts (homodimeric form) with CXADR. Interacts (via cytoplasmic domain) with the PI3 kinase; upon CXADR-binding. Interacts with ITGA4 and ITGB1; integrin alpha-4/beta-1 may regulate leukocyte to endothelial cells adhesion by controlling JAML homodimerization. In terms of tissue distribution, expression is restricted to the hematopoietic tissues with the exception of liver. Expressed in fetal liver, spleen and thymus. Preferentially expressed by mature leukocytes (at protein level).

It localises to the cell membrane. The protein localises to the cell junction. In terms of biological role, transmembrane protein of the plasma membrane of leukocytes that control their migration and activation through interaction with CXADR, a plasma membrane receptor found on adjacent epithelial and endothelial cells. The interaction between both receptors mediates the activation of gamma-delta T-cells, a subpopulation of T-cells residing in epithelia and involved in tissue homeostasis and repair. Upon epithelial CXADR-binding, JAML induces downstream cell signaling events in gamma-delta T-cells through PI3-kinase and MAP kinases. It results in proliferation and production of cytokines and growth factors by T-cells that in turn stimulate epithelial tissues repair. It also controls the transmigration of leukocytes within epithelial and endothelial tissues through adhesive interactions with epithelial and endothelial CXADR. The protein is Junctional adhesion molecule-like of Homo sapiens (Human).